Reading from the N-terminus, the 367-residue chain is Quinolinate synthase (367 aa).

Residues His45 and Ser62 each coordinate iminosuccinate. A [4Fe-4S] cluster-binding site is contributed by Cys109. Iminosuccinate is bound by residues 140-142 (YVN) and Ser161. Position 229 (Cys229) interacts with [4Fe-4S] cluster. Iminosuccinate contacts are provided by residues 255–257 (HPE) and Thr272. Cys319 contacts [4Fe-4S] cluster.

This sequence belongs to the quinolinate synthase family. Type 3 subfamily. Requires [4Fe-4S] cluster as cofactor.

It is found in the cytoplasm. The enzyme catalyses iminosuccinate + dihydroxyacetone phosphate = quinolinate + phosphate + 2 H2O + H(+). It functions in the pathway cofactor biosynthesis; NAD(+) biosynthesis; quinolinate from iminoaspartate: step 1/1. Its function is as follows. Catalyzes the condensation of iminoaspartate with dihydroxyacetone phosphate to form quinolinate. This chain is Quinolinate synthase, found in Geobacillus sp. (strain WCH70).